Reading from the N-terminus, the 172-residue chain is Ribosome maturation factor RimM (172 aa).

Residues 96-168 (DGEFYYHEII…RVQVELMEGL (73 aa)) form the PRC barrel domain.

This sequence belongs to the RimM family. Binds ribosomal protein uS19.

The protein resides in the cytoplasm. In terms of biological role, an accessory protein needed during the final step in the assembly of 30S ribosomal subunit, possibly for assembly of the head region. Essential for efficient processing of 16S rRNA. May be needed both before and after RbfA during the maturation of 16S rRNA. It has affinity for free ribosomal 30S subunits but not for 70S ribosomes. The chain is Ribosome maturation factor RimM from Streptococcus agalactiae serotype Ia (strain ATCC 27591 / A909 / CDC SS700).